The following is a 497-amino-acid chain: uncharacterized protein (497 aa).

Glycine 266–serine 273 contributes to the ATP binding site.

The protein belongs to the AAA ATPase family. Highly divergent.

The protein localises to the plastid. It localises to the chloroplast. This is an uncharacterized protein from Trieres chinensis (Marine centric diatom).